The following is a 122-amino-acid chain: Small ribosomal subunit protein uS13 (122 aa).

The tract at residues 93-122 (RRGLPVRGQRTKTNARTRKGPKKTIAGKKK) is disordered.

Belongs to the universal ribosomal protein uS13 family. Part of the 30S ribosomal subunit. Forms a loose heterodimer with protein S19. Forms two bridges to the 50S subunit in the 70S ribosome.

In terms of biological role, located at the top of the head of the 30S subunit, it contacts several helices of the 16S rRNA. In the 70S ribosome it contacts the 23S rRNA (bridge B1a) and protein L5 of the 50S subunit (bridge B1b), connecting the 2 subunits; these bridges are implicated in subunit movement. Contacts the tRNAs in the A and P-sites. This chain is Small ribosomal subunit protein uS13, found in Corynebacterium kroppenstedtii (strain DSM 44385 / JCM 11950 / CIP 105744 / CCUG 35717).